The chain runs to 399 residues: Glucose-1-phosphate adenylyltransferase (399 aa).

Residues tyrosine 100, glycine 165, 180-181, and serine 191 each bind alpha-D-glucose 1-phosphate; that span reads EK.

It belongs to the bacterial/plant glucose-1-phosphate adenylyltransferase family. Homotetramer.

It catalyses the reaction alpha-D-glucose 1-phosphate + ATP + H(+) = ADP-alpha-D-glucose + diphosphate. It functions in the pathway glycan biosynthesis; glycogen biosynthesis. Its function is as follows. Involved in the biosynthesis of ADP-glucose, a building block required for the elongation reactions to produce glycogen. Catalyzes the reaction between ATP and alpha-D-glucose 1-phosphate (G1P) to produce pyrophosphate and ADP-Glc. The polypeptide is Glucose-1-phosphate adenylyltransferase (Desulforamulus reducens (strain ATCC BAA-1160 / DSM 100696 / MI-1) (Desulfotomaculum reducens)).